The sequence spans 49 residues: Large ribosomal subunit protein bL33 (49 aa).

It belongs to the bacterial ribosomal protein bL33 family.

This Alkaliphilus metalliredigens (strain QYMF) protein is Large ribosomal subunit protein bL33.